Reading from the N-terminus, the 133-residue chain is Small ribosomal subunit protein uS9 (133 aa).

Over residues 98–113 (RKPLKTEGHLSRDPRA) the composition is skewed to basic and acidic residues. The disordered stretch occupies residues 98–133 (RKPLKTEGHLSRDPRAKERRKYGLKKARKAPQFSKR). Residues 114–133 (KERRKYGLKKARKAPQFSKR) are compositionally biased toward basic residues.

The protein belongs to the universal ribosomal protein uS9 family.

This chain is Small ribosomal subunit protein uS9, found in Parasynechococcus marenigrum (strain WH8102).